A 197-amino-acid polypeptide reads, in one-letter code: Probable molybdenum cofactor guanylyltransferase (197 aa).

GTP is bound by residues 12 to 14, Lys-24, Asp-71, and Asp-103; that span reads LAG. Residue Asp-103 participates in Mg(2+) binding.

This sequence belongs to the MobA family. The cofactor is Mg(2+).

It localises to the cytoplasm. The catalysed reaction is Mo-molybdopterin + GTP + H(+) = Mo-molybdopterin guanine dinucleotide + diphosphate. Its function is as follows. Transfers a GMP moiety from GTP to Mo-molybdopterin (Mo-MPT) cofactor (Moco or molybdenum cofactor) to form Mo-molybdopterin guanine dinucleotide (Mo-MGD) cofactor. The sequence is that of Probable molybdenum cofactor guanylyltransferase from Mycolicibacterium paratuberculosis (strain ATCC BAA-968 / K-10) (Mycobacterium paratuberculosis).